Reading from the N-terminus, the 776-residue chain is Structure-specific endonuclease subunit SLX4 (776 aa).

The span at 201-217 (EEQMVSDDNSSTEDDTD) shows a compositional bias: acidic residues. Disordered stretches follow at residues 201-223 (EEQM…QNDG), 263-283 (KSLQ…PDQN), and 507-531 (PPLD…KPHS).

It belongs to the SLX4 family. As to quaternary structure, forms a heterodimer with SLX1. Phosphorylated in response to DNA damage.

It is found in the nucleus. In terms of biological role, regulatory subunit of the SLX1-SLX4 structure-specific endonuclease that resolves DNA secondary structures generated during DNA repair and recombination. Has endonuclease activity towards branched DNA substrates, introducing single-strand cuts in duplex DNA close to junctions with ss-DNA. The sequence is that of Structure-specific endonuclease subunit SLX4 from Candida albicans (strain SC5314 / ATCC MYA-2876) (Yeast).